The primary structure comprises 508 residues: Rhamnogalacturonan I rhamnosyltransferase 1 (508 aa).

Residues 41 to 63 (LWMIRAVTVLLLWSCFVHLMALG) form a helical; Signal-anchor for type II membrane protein membrane-spanning segment. N-linked (GlcNAc...) asparagine glycosylation is found at Asn136, Asn202, and Asn223. A substrate-binding site is contributed by 277–279 (HLR). N-linked (GlcNAc...) asparagine glycosylation is present at Asn391.

The protein belongs to the glycosyltransferase GT106 family. Highly expressed in siliques. Expressed in stems and flowers. Expressed at low levels in roots and rosette leaves.

The protein localises to the golgi apparatus membrane. The catalysed reaction is alpha-D-galacturonosyl-[(1-&gt;2)-alpha-L-rhamnosyl-(1-&gt;4)-alpha-D-galacturonosyl](n) + UDP-beta-L-rhamnose = [(1-&gt;2)-alpha-L-rhamnosyl-(1-&gt;4)-alpha-D-galacturonosyl](n+1) + UDP + H(+). The protein operates within glycan metabolism; pectin biosynthesis. In terms of biological role, glycosyltransferase involved in the formation of rhamnogalacturonan I (RG-I) oligosaccharides in the seed coat mucilage, which is a specialized cell wall with abundant RG-I. Transfers the rhamnose residue from UDP-beta-L-rhamnose to RG-I oligosaccharides. Prefers RG-I oligosaccharides with a degree of polymerization of 5 or larger than 5. Does not act on oligosaccharides with a degree of polymerization of 4 or smaller than 4. Does not require metal ions for its activity. The polypeptide is Rhamnogalacturonan I rhamnosyltransferase 1 (Arabidopsis thaliana (Mouse-ear cress)).